The primary structure comprises 588 residues: Proline--tRNA ligase (588 aa).

It belongs to the class-II aminoacyl-tRNA synthetase family. ProS type 1 subfamily. In terms of assembly, homodimer.

It is found in the cytoplasm. The enzyme catalyses tRNA(Pro) + L-proline + ATP = L-prolyl-tRNA(Pro) + AMP + diphosphate. In terms of biological role, catalyzes the attachment of proline to tRNA(Pro) in a two-step reaction: proline is first activated by ATP to form Pro-AMP and then transferred to the acceptor end of tRNA(Pro). As ProRS can inadvertently accommodate and process non-cognate amino acids such as alanine and cysteine, to avoid such errors it has two additional distinct editing activities against alanine. One activity is designated as 'pretransfer' editing and involves the tRNA(Pro)-independent hydrolysis of activated Ala-AMP. The other activity is designated 'posttransfer' editing and involves deacylation of mischarged Ala-tRNA(Pro). The misacylated Cys-tRNA(Pro) is not edited by ProRS. This is Proline--tRNA ligase from Helicobacter hepaticus (strain ATCC 51449 / 3B1).